A 290-amino-acid polypeptide reads, in one-letter code: 33 kDa chaperonin (290 aa).

Intrachain disulfides connect Cys-235–Cys-237 and Cys-268–Cys-271.

Belongs to the HSP33 family. In terms of processing, under oxidizing conditions two disulfide bonds are formed involving the reactive cysteines. Under reducing conditions zinc is bound to the reactive cysteines and the protein is inactive.

It is found in the cytoplasm. Functionally, redox regulated molecular chaperone. Protects both thermally unfolding and oxidatively damaged proteins from irreversible aggregation. Plays an important role in the bacterial defense system toward oxidative stress. The protein is 33 kDa chaperonin of Streptococcus pyogenes serotype M49 (strain NZ131).